The sequence spans 320 residues: Methionyl-tRNA formyltransferase (320 aa).

117-120 lines the (6S)-5,6,7,8-tetrahydrofolate pocket; sequence SLLP.

This sequence belongs to the Fmt family.

The catalysed reaction is L-methionyl-tRNA(fMet) + (6R)-10-formyltetrahydrofolate = N-formyl-L-methionyl-tRNA(fMet) + (6S)-5,6,7,8-tetrahydrofolate + H(+). Its function is as follows. Attaches a formyl group to the free amino group of methionyl-tRNA(fMet). The formyl group appears to play a dual role in the initiator identity of N-formylmethionyl-tRNA by promoting its recognition by IF2 and preventing the misappropriation of this tRNA by the elongation apparatus. This is Methionyl-tRNA formyltransferase from Bordetella petrii (strain ATCC BAA-461 / DSM 12804 / CCUG 43448).